The primary structure comprises 464 residues: Armadillo repeat-containing protein 6 homolog (464 aa).

T9 bears the Phosphothreonine mark. ARM repeat units follow at residues 235–275 (AHEH…TLAV), 287–331 (GGLK…QQGV), 332–374 (APII…FDTG), and 375–418 (IAEV…ISFG).

This sequence belongs to the ARMC6 family.

This Drosophila melanogaster (Fruit fly) protein is Armadillo repeat-containing protein 6 homolog.